A 284-amino-acid chain; its full sequence is HTH-type transcriptional activator RhaR (284 aa).

The region spanning 181–279 (DMLMNALRAS…GVSPSAYRQR (99 aa)) is the HTH araC/xylS-type domain. 2 DNA-binding regions (H-T-H motif) span residues 198–219 (EAFC…KEQT) and 246–269 (IGDV…HQAF).

Binds DNA as a dimer.

The protein localises to the cytoplasm. Its function is as follows. Activates expression of the rhaSR operon in response to L-rhamnose. In Pectobacterium atrosepticum (strain SCRI 1043 / ATCC BAA-672) (Erwinia carotovora subsp. atroseptica), this protein is HTH-type transcriptional activator RhaR.